The following is a 280-amino-acid chain: Pantothenate synthetase (280 aa).

Position 26–33 (26–33 (MGNLHEGH)) interacts with ATP. Histidine 33 acts as the Proton donor in catalysis. (R)-pantoate is bound at residue glutamine 57. Beta-alanine is bound at residue glutamine 57. 145 to 148 (GKKD) provides a ligand contact to ATP. Glutamine 151 is a binding site for (R)-pantoate. Residues valine 174 and 182–185 (LSSR) each bind ATP.

Belongs to the pantothenate synthetase family. As to quaternary structure, homodimer.

The protein resides in the cytoplasm. It catalyses the reaction (R)-pantoate + beta-alanine + ATP = (R)-pantothenate + AMP + diphosphate + H(+). It participates in cofactor biosynthesis; (R)-pantothenate biosynthesis; (R)-pantothenate from (R)-pantoate and beta-alanine: step 1/1. Functionally, catalyzes the condensation of pantoate with beta-alanine in an ATP-dependent reaction via a pantoyl-adenylate intermediate. The chain is Pantothenate synthetase from Bordetella bronchiseptica (strain ATCC BAA-588 / NCTC 13252 / RB50) (Alcaligenes bronchisepticus).